Reading from the N-terminus, the 1755-residue chain is Transposon Ty1-LR2 Gag-Pol polyprotein (1755 aa).

Composition is skewed to polar residues over residues Met-1 to Ser-23, Thr-48 to Ser-60, and Gln-127 to Phe-152. Disordered regions lie at residues Met-1–Gln-93, Pro-126–Met-174, and Gly-352–Thr-421. Residues Thr-153–Thr-165 show a composition bias toward low complexity. The interval Asn-299–His-401 is RNA-binding. Over residues Asn-402–Ser-418 the composition is skewed to low complexity. Ser-416 is modified (phosphoserine). The For protease activity; shared with dimeric partner role is filled by Asp-461. The interval Asn-583–Cys-640 is integrase-type zinc finger-like. One can recognise an Integrase catalytic domain in the interval Asn-660–Pro-835. The Mg(2+) site is built by Asp-671 and Asp-736. Disordered stretches follow at residues Ser-956–Lys-1087, Arg-1092–Pro-1111, and Asp-1130–Thr-1187. Residues Ser-960–Thr-969 are compositionally biased toward low complexity. Positions Ser-1005–Thr-1015 are enriched in polar residues. Basic and acidic residues predominate over residues Glu-1038–Ser-1053. 2 stretches are compositionally biased toward polar residues: residues Tyr-1054–Asp-1082 and Pro-1101–Pro-1111. Positions Lys-1178 to Arg-1212 match the Bipartite nuclear localization signal motif. The region spanning Asn-1338–Gln-1476 is the Reverse transcriptase Ty1/copia-type domain. Asp-1346, Asp-1427, Asp-1428, Asp-1610, Glu-1652, and Asp-1685 together coordinate Mg(2+). The region spanning Asp-1610–Lys-1752 is the RNase H Ty1/copia-type domain.

In terms of assembly, the capsid protein forms a homotrimer, from which the VLPs are assembled. The protease is a homodimer, whose active site consists of two apposed aspartic acid residues. Post-translationally, initially, virus-like particles (VLPs) are composed of the structural unprocessed proteins Gag and Gag-Pol, and also contain the host initiator methionine tRNA (tRNA(i)-Met) which serves as a primer for minus-strand DNA synthesis, and a dimer of genomic Ty RNA. Processing of the polyproteins occurs within the particle and proceeds by an ordered pathway, called maturation. First, the protease (PR) is released by autocatalytic cleavage of the Gag-Pol polyprotein yielding capsid protein p45 and a Pol-p154 precursor protein. This cleavage is a prerequisite for subsequent processing of Pol-p154 at the remaining sites to release the mature structural and catalytic proteins. Maturation takes place prior to the RT reaction and is required to produce transposition-competent VLPs.

It localises to the cytoplasm. The protein localises to the nucleus. It carries out the reaction DNA(n) + a 2'-deoxyribonucleoside 5'-triphosphate = DNA(n+1) + diphosphate. It catalyses the reaction Endonucleolytic cleavage to 5'-phosphomonoester.. Functionally, capsid protein (CA) is the structural component of the virus-like particle (VLP), forming the shell that encapsulates the retrotransposons dimeric RNA genome. The particles are assembled from trimer-clustered units and there are holes in the capsid shells that allow for the diffusion of macromolecules. CA also has nucleocapsid-like chaperone activity, promoting primer tRNA(i)-Met annealing to the multipartite primer-binding site (PBS), dimerization of Ty1 RNA and initiation of reverse transcription. The aspartyl protease (PR) mediates the proteolytic cleavages of the Gag and Gag-Pol polyproteins after assembly of the VLP. In terms of biological role, reverse transcriptase/ribonuclease H (RT) is a multifunctional enzyme that catalyzes the conversion of the retro-elements RNA genome into dsDNA within the VLP. The enzyme displays a DNA polymerase activity that can copy either DNA or RNA templates, and a ribonuclease H (RNase H) activity that cleaves the RNA strand of RNA-DNA heteroduplexes during plus-strand synthesis and hydrolyzes RNA primers. The conversion leads to a linear dsDNA copy of the retrotransposon that includes long terminal repeats (LTRs) at both ends. Its function is as follows. Integrase (IN) targets the VLP to the nucleus, where a subparticle preintegration complex (PIC) containing at least integrase and the newly synthesized dsDNA copy of the retrotransposon must transit the nuclear membrane. Once in the nucleus, integrase performs the integration of the dsDNA into the host genome. This is Transposon Ty1-LR2 Gag-Pol polyprotein (TY1B-LR2) from Saccharomyces cerevisiae (strain ATCC 204508 / S288c) (Baker's yeast).